A 76-amino-acid polypeptide reads, in one-letter code: UPF0154 protein Sca_0984 (76 aa).

A helical transmembrane segment spans residues 4–24; that stretch reads WLAILLIVAALIIGLVGGFFL.

The protein belongs to the UPF0154 family.

The protein localises to the cell membrane. In Staphylococcus carnosus (strain TM300), this protein is UPF0154 protein Sca_0984.